The chain runs to 161 residues: Transcription elongation factor GreA (161 aa).

This sequence belongs to the GreA/GreB family.

Functionally, necessary for efficient RNA polymerase transcription elongation past template-encoded arresting sites. The arresting sites in DNA have the property of trapping a certain fraction of elongating RNA polymerases that pass through, resulting in locked ternary complexes. Cleavage of the nascent transcript by cleavage factors such as GreA or GreB allows the resumption of elongation from the new 3'terminus. GreA releases sequences of 2 to 3 nucleotides. The polypeptide is Transcription elongation factor GreA (Desulfotalea psychrophila (strain LSv54 / DSM 12343)).